The primary structure comprises 483 residues: Uridine/cytidine kinase UKL1, chloroplastic (483 aa).

The transit peptide at 1 to 47 (MPEDSTAIDYVMEKASGPHFSGLRLDGLLSSPSKSSVSSPSHFRLSN) directs the protein to the chloroplast. A uridine kinase region spans residues 59–264 (PHQPFVIGVT…IVQHIHTKLG (206 aa)). A uracil phosphoribosyltransferase region spans residues 274-483 (NVFVIETTFQ…FGDRYFGTDE (210 aa)). GTP is bound by residues Lys-298, Arg-307, and 341-344 (CKKL). 5-phospho-alpha-D-ribose 1-diphosphate is bound by residues Arg-351 and Arg-376. Residue Arg-396 participates in GTP binding. 5-phospho-alpha-D-ribose 1-diphosphate is bound by residues Asp-402, 407–410 (TGNS), and Glu-473. 472–474 (GEF) lines the uracil pocket.

It in the N-terminal section; belongs to the uridine kinase family. In the C-terminal section; belongs to the UPRTase family.

The protein resides in the plastid. The protein localises to the chloroplast. The enzyme catalyses cytidine + ATP = CMP + ADP + H(+). It carries out the reaction uridine + ATP = UMP + ADP + H(+). It participates in pyrimidine metabolism; CTP biosynthesis via salvage pathway; CTP from cytidine: step 1/3. The protein operates within pyrimidine metabolism; UMP biosynthesis via salvage pathway; UMP from uridine: step 1/1. Functionally, involved in the pyrimidine salvage pathway. Phosphorylates uridine to uridine monophosphate (UMP). Phosphorylates cytidine to cytidine monophosphate (CMP). Does not possess uracil phosphoribosyltransferase (UPRTase) activity that catalyzes the conversion of uracil and 5-phospho-alpha-D-ribose 1-diphosphate (PRPP) to UMP and diphosphate. This is Uridine/cytidine kinase UKL1, chloroplastic from Arabidopsis thaliana (Mouse-ear cress).